A 185-amino-acid polypeptide reads, in one-letter code: Large ribosomal subunit protein uL22 (185 aa).

It belongs to the universal ribosomal protein uL22 family. Part of the 50S ribosomal subunit.

This protein binds specifically to 23S rRNA. It makes multiple contacts with different domains of the 23S rRNA in the assembled 50S subunit and ribosome. Functionally, the globular domain of the protein is located near the polypeptide exit tunnel on the outside of the subunit, while an extended beta-hairpin is found that lines the wall of the exit tunnel in the center of the 70S ribosome. This chain is Large ribosomal subunit protein uL22, found in Pyrobaculum aerophilum (strain ATCC 51768 / DSM 7523 / JCM 9630 / CIP 104966 / NBRC 100827 / IM2).